We begin with the raw amino-acid sequence, 302 residues long: 4-hydroxy-tetrahydrodipicolinate synthase (302 aa).

A pyruvate-binding site is contributed by Thr-55. Residue Tyr-144 is the Proton donor/acceptor of the active site. Lys-172 functions as the Schiff-base intermediate with substrate in the catalytic mechanism. A pyruvate-binding site is contributed by Val-214.

The protein belongs to the DapA family. As to quaternary structure, homotetramer; dimer of dimers.

The protein resides in the cytoplasm. The catalysed reaction is L-aspartate 4-semialdehyde + pyruvate = (2S,4S)-4-hydroxy-2,3,4,5-tetrahydrodipicolinate + H2O + H(+). Its pathway is amino-acid biosynthesis; L-lysine biosynthesis via DAP pathway; (S)-tetrahydrodipicolinate from L-aspartate: step 3/4. In terms of biological role, catalyzes the condensation of (S)-aspartate-beta-semialdehyde [(S)-ASA] and pyruvate to 4-hydroxy-tetrahydrodipicolinate (HTPA). This Synechococcus sp. (strain CC9902) protein is 4-hydroxy-tetrahydrodipicolinate synthase.